We begin with the raw amino-acid sequence, 354 residues long: MADQNNPWDTTPAADSAAQSADAWGTPTTAPTDGGGADWLTSTPAPNVEHFNILDPFHKTLIPLDSWVTEGIDWVVTHFRPVFQGVRVPVDYILNGFQQLLLGMPAPVAIIVFALIAWQISGVGMGVATLVSLIAIGAIGAWSQAMVTLALVLTALLFCIVIGLPLGIWLARSPRAAKIIRPLLDAMQTTPAFVYLVPIVMLFGIGNVPGVVVTIIFALPPIIRLTILGINQVPADLIEASRSFGASPRQMLFKVQLPLAMPTIMAGVNQTLMLALSMVVIASMIAVGGLGQMVLRGIGRLDMGLATVGGVGIVILAIILDRLTQAVGRDSRSRGNRRWYTTGPVGLLTRPFIK.

The tract at residues 1 to 41 (MADQNNPWDTTPAADSAAQSADAWGTPTTAPTDGGGADWLT) is disordered. Topologically, residues 1-99 (MADQNNPWDT…VDYILNGFQQ (99 aa)) are cytoplasmic. The span at 13 to 32 (AADSAAQSADAWGTPTTAPT) shows a compositional bias: low complexity. A helical transmembrane segment spans residues 100–120 (LLLGMPAPVAIIVFALIAWQI). Position 121 (Ser121) is a topological domain, periplasmic. A helical transmembrane segment spans residues 122–142 (GVGMGVATLVSLIAIGAIGAW). The Cytoplasmic portion of the chain corresponds to 143–148 (SQAMVT). An ABC transmembrane type-1 domain is found at 145–324 (AMVTLALVLT…ILAIILDRLT (180 aa)). A helical membrane pass occupies residues 149 to 169 (LALVLTALLFCIVIGLPLGIW). Residues 170–198 (LARSPRAAKIIRPLLDAMQTTPAFVYLVP) are Periplasmic-facing. The chain crosses the membrane as a helical span at residues 199–219 (IVMLFGIGNVPGVVVTIIFAL). At 220 to 270 (PPIIRLTILGINQVPADLIEASRSFGASPRQMLFKVQLPLAMPTIMAGVNQ) the chain is on the cytoplasmic side. A helical membrane pass occupies residues 271–291 (TLMLALSMVVIASMIAVGGLG). The Periplasmic portion of the chain corresponds to 292-300 (QMVLRGIGR). Residues 301–321 (LDMGLATVGGVGIVILAIILD) form a helical membrane-spanning segment. The Cytoplasmic segment spans residues 322–354 (RLTQAVGRDSRSRGNRRWYTTGPVGLLTRPFIK).

Belongs to the binding-protein-dependent transport system permease family. CysTW subfamily. The complex is composed of two ATP-binding proteins (ProV), two transmembrane proteins (ProW) and a solute-binding protein (ProX).

The protein localises to the cell inner membrane. In terms of biological role, part of the ProU ABC transporter complex involved in glycine betaine and proline betaine uptake. Probably responsible for the translocation of the substrate across the membrane. In Escherichia coli (strain K12), this protein is Glycine betaine/proline betaine transport system permease protein ProW.